The following is a 4960-amino-acid chain: MSRFSCIFPTLTDGYVSNPDHTRAAGRRTYTIDLSGWKAPGSETEAHILAAWGLVLSSYVGTDEVAFYVVPTTGPDTTALADLKVEGDMSRQSLTYAAEQLLHPGLVGAGQVSGETANTIITFAKDIESLFVTQTEAANVGTAMAQALAEVGTCDNDRLIKDLNLMSPAHLEHIWRFNANVPGIWEESFHDVIERHATNRPHSPAVDAWDTKLTYADLVREARLLAAYLQQRGVGPGSVVPISFERSGAALVAMLAVSKAGGAFVSVPPNLPAGRLDAILDVIEAPFVVTWTRYESFWAERLPTLPIDNYPKPAADTTVEALGKPEDLFYVIFTSGSTGRPKGCMLSHSNWLNGALRNAPSWKYGPESRVLQMLSHTFDMSLLEICTSLGSGACVNHVIMTPSLARALRPDDVPELKTMCLGGEAFPKEIVTMWSERINLWQFYGPSECSINSSSRPITRPDADPLNIGPPNSAACWVADVHNYNKLVPVGAIGELLVSGPIVGMGYMKNPVKTAEAFLEEVGFVAKDDPQFGGFRFYRTGDLVRWNSDGTITFCGRADTQVKLNGQRLELAEVEYQLGLESGVQYAIAMAPQAGLCKNNLIAILTVKGTSTGNQDTAADEIPLLDRRDPIVQETVKKLRSQLQHALPRYMVPTIWAFVGRMPMSASGKIDRVQLRDWVQKMNQETFDAITGRSLEAEDHVLGLSRLEQEVQLAWAEALSLSAAEVGLQQPFVALGGDSIKALDAVARCRARQIKISMVHTLSCEGVREAASLAEVQETPAQQVAEMAVDYSNLWTRLSDDYDLDKLGVTQLEEVEDVFPCTTMQEGMFLGQIRRPGAYHMRFFHRVQLKGGCLPTVERIQQAWASLVERHPSLRTVFVDDLSPEAIYHSIVLRSVPMELRMREVPRDLRAEAALAMFTEELVPFRANAPLHRMLLLTCRGRVPYFMLEISHVIMDGYALSVFRREFIRACSSSAPLPRGPDYRMFANYHRTRQTDDSARYWTNYLADCVPCHIPTHAVSAPSDAPPEWPRTLQRRDFGFENSAAFLQRCKERQVTLACAIRAAWALVLRAYTQSEDVCFGYVSSGRNVPVPEVETIFGLCLSMQVCRARLSEASTIASLARKIQEDYAASLPFQHYPLAEAQRGLKQTHGQGLFNTAISMEWVPPSVEDEDALLDLEEICEQDDPTEYDIAISVDVHEGHIKLGFLYWPNLTDFEITHLAEALRGAMNRFAFQPDEALNTLSLLQASDVCSALADGPTLLPLEAVRGNVVSMIDRWVTRQPEGAAIDGWDGSLSYKELHEQSSWVARNLLHQGVQLGDRVLVSCEPDACWCSRTRRTQRSASNGWQKKCNAALIVADPTYEERFATAGARVLSTTTVCAPAAWDYEFPSLDEHDLVSILFTSGSTGTPKGILMEHGALATSVLLGHGRTLRFSRYTRMLHFASLTFDAALAEMFTTLAHGGCICVPCEDDRLSDVSGCISRFAVNTAMLTPSVGRLLDPGALLTLKTLIMVGEPMSRLDVERFAPVLDLYNGAGPTETSIMVTIAGPMEPTDEPVNLGYAVAGVRLWVTEAENPNRLAPLGAVGELIVEGRLVTRGYLDGPARTQEAFLPSLPWLPSQHALYRTGDLVRYADDGSLRYMGRKDTQVKLRGQRIELQEVEYHLRKSLQQAQIVVEMVVPAGKMRAQASLVAFVSGLTAEDVESSSACNLEGTILISQIVLPKSAFQALEEVLPRHMIPSVYNALDTIPLSVNGKADRRRLLPPIRTPLKESKSVKWTPASELERTLLELWAATLGLEAETIHGDDSFFELGGDFVSAMKLVATARDKFKLSLSVPQMFRYPTICHLAAEVGEPAGQSASSASSTTEEGFTFSTPDDSSTNDGVDDDFLELVTAQLAQLAQEKGKKVDIAALLKQLQGGSSSNKTPSVSSSSSSSSSSKRKKNAAKAESLAEAAAPIPVQFSLLDGGADALDKVRAQAVEHCKITHEDIEDIYPATALQEGMMALTARTPGVYTTSLTGNLSELVDLAWLQYAWGKAAEAHPILRTRIILTDNNTAVQVVQRAKGLPWDTYSLREDDVLPDLTSNMTSGSPLLRLALVHRQNQPRMLLVAIHHALYDGWSMPLLKQAVEDAYHGRDLRSQPFTPFIKHLIAGKPAAQDFWTTHLDSFVGGIFPKLPSIYHQIQPTKRRTRPMTLPTAAPKAQYTMATKIQAAWAVTVPRYAEVNDIVFGTVSTGRSAPVPAIDRMVGPTITTVPVRISLGDQADRVLSLLQRVQEDSWNKLDHEHLGLQHIRHLGESAAAACSFQTLLVILPREQPDTKYRSTLLSGLQDVAELEGVDTYPLMLVCEPDSARLHLTAVFDRAVLDGATLDRMLAHWELVLTQMWNEPDMAVIEIDAVSCSDKETLMRWNTGETIPDGCAHDAVCEWSRRTPHAPAVCAWDGDWTYEELERCSSLVASQIFAHGLSSGDFVALYHEKSRWTAAGILALFKAGAILITLDPAHPTDRIKDILDQARPRLILTSQSLLDVARNLETPVLSVQLAASQPLPEGWSSLPTISPTLAAYAPFTSGSTGRPKGIPLDHRGLAASTASIARSCLLRPASRVLHFASFAFDASMMEQLIAWHAGGCLCIPDETARQTDLAKCIRDFNVTWAFLAPSCLRLITPDDVPSLQALGLGGESMTSEDITIWSPRLRQIIQLYGPAECCIVAALTEVTKPSENRLIGRPNACRCWVVDPQNPDRLAPIGAVGELLIEGITVGRGYINDPDRTTPAFIRPPKWLQTLYPDDQEPKRLYRTGDLVRYAGVDGKLAFIGRRDGQLKLHGQRTELADVEAHLRSLIPGMQKMVVEMVHSADNQSPFLAAFLEEISTSQKPKEREIGLLHLSQSQCALDVKAIDSALSRTVPQYMIPSMYLHISRLPLSASGKLDRRHLREMVAELPHQRINEYAAGSGLSVPDRPVTSQEREMQAIWARVLSLDPNTIGVNDDFFRIGGDSISGMQVSTKCNAAGIHITSADLFRHRTIEQLICHINTIRTTDCASVSLPTEPVDEWVALAPIQQLFFEVAPEGPNHFNQSLLLRTSRRVGVEELAGGLDILIGRYSMLRARFCRKDSGQWFQQVKSLDSEPVSAFYRLAAHNQITRESLPTLFTAAQMALSIEDGPLLTVDLVELKDGSQLVYLAAHHLIIDLVSWRILHGDLEEYLQTGSLSSATGSVPFLTWTQLQAEYSAEHLTPARALPGFQEANDDFDVMRYWGISSESNTFGQTSTSRFTLDRTVTDILFGSANKVMDTRPVEILQAALWYSCNQALTDHPGPRIYVEGHGREPWTDSIDVSGTVGWFTIMSPLVSTPWHHLSRKSMRDFVDVLSYIKDQRRRIPANGWAYFTSHYLNDEGRVAYGRTKPVMEVLFNYMGQYQEMKREDAMLQLAGDDVQSGTGASDIADNVPRFSLIDVTAFTANGCLTFEFTFPQLIQQDARLEHCIKESFDGPTCPRRLEYLPLLSRATGHVVGAAARSAGISATIQVSGYVSRANRPTFIGKVSDHSHFDQVVMVPGSLQHLVRGDAMDANPTEGLPHTINITSDSTGAIICEWNVSHALVDAMSIAVIQREVNQALEGSLGQHQNLPQYVEYIEWLTLQDNTEAQAYWQKYLDGVEPCLFPKLTSSPDKVNPEATIAAIRATWSRDARMDELCHKHAITLTNLFHIVWAIVLGAYVGTDEVCFGYTALGRDVPVHRVETMVGPLVNVLATTVRHEENETILNALLTHQAHLTNSLQHQHYALADVYAALGLVGSQLFNAIVSLQDTSHFDAPDEQRTRLEMLPANDVSEYDVALNIGVDKSSIQLVRSYQTVSLSAEQADALLRTAFHVLDEILRDPTQRFCELEVISPKCKEQLVKWNAGMLAPTDEYIHEKIQGQCRIHNSRQAVCAWDGIFTYAEVDDLSSRLAARLIRMGVTSEDIIPIYSPKSRWTVIAILGVLKAGAAFTLLETSHPMARLHVICNQIKAPMIIAPASHAIPAANLAPILVVLDKIMSLAQERPVPLPAVGIPPAREALAYLIFTSGSTGNPKVVMVTHQNLCSNASIITTSVNMTSDSRVLQFASHAFDACILGLLGALIAGACLIIPSESENKEDLAGCMERMDVTWALLTPSVARILKPETLPRLLNLVLGGEPIAASDLDMWRGHVQVVCAYGPTETTIVASTTSPSTFPMDGKNIGVPSGSSLWVVSRQNYQKLAPLGATGELLIEGPNVSLGYLGDPGKANKAFPDSPIWLSQLRKSPTRVYRTGDLVRFDTTTGTIRFVGRKDNQIKFHGQRIELGEIEHHAQLAFSSASMVIVDLITPEQPQQPYIVAFVHQSDAANETTDTNDTLLLPPSEAFRADALAAQNKMYERLPHYMVPAVFLPLHRLPLSVTGKADRKRLRQCALALSSPELSAYRATASRKRMPSTAAERKMQGLVATVLGRDPTEIGMDDSFFYLGGDSVQAMRLVAEGRQQGLTLSLRAIFDSPCLGDLSDQAKSLIEDNQRASTASRGNLRYDCDQIDKIVATKSLNKTDVVDVLPTTSFQHHWLDAQLKSYIVADISGPIDPARLLRAMHRVVEAHPILRVSFVPYENTTMQVILNKAVAIKSADPSNTTVEEICRQDADTPTVPGMPYLRVILATQVEADHTLILRLSHAQYDAVSLSLLMNDLGHAYANETHPLPSSHFPRFNDYTTYQQAQRADPTAITFWRHLLQDVSLTYLNLQPAESSASNGTPITLSRDIDIAIFPSLPSDITIATTVKAAWSLVLAQKTNSPAVIFGQVVHGRAIALPGVEGIIGPCANITPVVARLGLQTTGLELMQTLQDQHRSAMPYETVDLDDALAYAKDSQAGRKGLQTIVQHQNNVMVDDMELSLGEVKCGVDVRAVDHLPKEVWVYSSVDEKRPGMLEVKIMSSTLVLGEEVAEELMGLLVEKIVGLLRHPESVCF.

Positions 194–564 (ERHATNRPHS…CGRADTQVKL (371 aa)) are adenylation 1. A Carrier 1 domain is found at 705–778 (SRLEQEVQLA…EAASLAEVQE (74 aa)). Ser-739 carries the O-(pantetheine 4'-phosphoryl)serine modification. The tract at residues 816–1247 (EDVFPCTTMQ…ALNTLSLLQA (432 aa)) is condensation 1. Positions 1275-1650 (DRWVTRQPEG…GRKDTQVKLR (376 aa)) are adenylation 2. The 78-residue stretch at 1777–1854 (TPASELERTL…HLAAEVGEPA (78 aa)) folds into the Carrier 2 domain. Disordered regions lie at residues 1855–1883 (GQSA…NDGV) and 1917–1943 (GGSS…KKNA). 2 stretches are compositionally biased toward low complexity: residues 1857 to 1881 (SASS…STND) and 1919 to 1936 (SSSN…SSSS). A condensation 2 region spans residues 1989–2404 (EDIYPATALQ…AVSCSDKETL (416 aa)). The tract at residues 2427–2819 (RRTPHAPAVC…IGRRDGQLKL (393 aa)) is adenylation 3. Residues 2955-3031 (RPVTSQEREM…QLICHINTIR (77 aa)) form the Carrier 3 domain. Ser-2992 bears the O-(pantetheine 4'-phosphoryl)serine mark. 2 condensation regions span residues 3049-3464 (VALA…FTFP) and 3520-3889 (SGYV…EQLV). The adenylation 4 stretch occupies residues 3914-4304 (HNSRQAVCAW…VGRKDNQIKF (391 aa)). The 77-residue stretch at 4438 to 4514 (MPSTAAERKM…DLSDQAKSLI (77 aa)) folds into the Carrier 4 domain. Ser-4475 carries the O-(pantetheine 4'-phosphoryl)serine modification. Residues 4551 to 4878 (DVLPTTSFQH…LQTIVQHQNN (328 aa)) are condensation 5.

Belongs to the NRP synthetase family.

The protein operates within secondary metabolite biosynthesis. Functionally, nonribosomal peptide synthetase; part of the gene cluster that mediates the biosynthesis of malformins, cyclic pentapeptides with a disulfide bond between 2 consecutive cysteins, that show potential anti-tumor as well as antimalarial and antitrypanosomal properties. The nonribosomal peptide synthetase mlfA is responsible of the formation of the cyclic pentapeptide. The malformin biosynthesis clusters in malformin-producing fungi also contain enzymes involved in the formation of the disulfide bond between the two consecutive cysteins within malformins, in addition to additional tailoring enzymes such as methyltransferases or oxidoreductases. They are also composed of up to 4 major facilitator superfamily transporters, and transcription factors probably involved in the regulation of the expression of those clusters. This chain is Malformin synthetase mlfA, found in Aspergillus neoniger (strain CBS 115656).